The sequence spans 111 residues: Stress-response A/B barrel domain-containing protein At5g22580 (111 aa).

Positions 6 to 98 (FKHLVVVKFK…VIDKIVLLDF (93 aa)) constitute a Stress-response A/B barrel domain. 4 residues coordinate Mg(2+): V31, I34, D35, and V37.

Homodimer. Mg(2+) is required as a cofactor.

Involved in stress response. The chain is Stress-response A/B barrel domain-containing protein At5g22580 from Arabidopsis thaliana (Mouse-ear cress).